The following is a 627-amino-acid chain: tRNA uridine 5-carboxymethylaminomethyl modification enzyme MnmG (627 aa).

FAD is bound by residues 13–18 (GGGHAG), Val-125, and Ser-180. Residue 274-288 (GPRYCPSIEDKVVRF) participates in NAD(+) binding. Gln-371 is an FAD binding site.

The protein belongs to the MnmG family. As to quaternary structure, homodimer. Heterotetramer of two MnmE and two MnmG subunits. It depends on FAD as a cofactor.

It is found in the cytoplasm. Its function is as follows. NAD-binding protein involved in the addition of a carboxymethylaminomethyl (cmnm) group at the wobble position (U34) of certain tRNAs, forming tRNA-cmnm(5)s(2)U34. The protein is tRNA uridine 5-carboxymethylaminomethyl modification enzyme MnmG of Francisella tularensis subsp. tularensis (strain FSC 198).